A 209-amino-acid polypeptide reads, in one-letter code: Uracil phosphoribosyltransferase (209 aa).

Residues R79, R104, and 131–139 (DPMLATGGS) each bind 5-phospho-alpha-D-ribose 1-diphosphate. Uracil contacts are provided by residues I194 and 199–201 (GDA). D200 is a binding site for 5-phospho-alpha-D-ribose 1-diphosphate.

Belongs to the UPRTase family. Mg(2+) serves as cofactor.

The enzyme catalyses UMP + diphosphate = 5-phospho-alpha-D-ribose 1-diphosphate + uracil. Its pathway is pyrimidine metabolism; UMP biosynthesis via salvage pathway; UMP from uracil: step 1/1. With respect to regulation, allosterically activated by GTP. Functionally, catalyzes the conversion of uracil and 5-phospho-alpha-D-ribose 1-diphosphate (PRPP) to UMP and diphosphate. This chain is Uracil phosphoribosyltransferase, found in Clostridioides difficile (strain 630) (Peptoclostridium difficile).